The following is an 862-amino-acid chain: MFSAKAKTYELKLEQTRCNGDWQAIPEVARKLHKHNSSKSFVCELAKIEASLKSALTAELKNIANVLEPKLIDNQYSLIPALPSARTDPLLSQLNSLNIQNATEDEKLQETSIRLLLYIVQRKFPEAVDLDWSPQGIPWTETSTGICILQATVLSSLAQYAQANDEVAYQYVRSAIGLIQNANIGKKPLPELTRWCDLAYSLYAQMSVSACSSQLERANILTTCLSYFTEHKSVNLLYKLVTSRQAIKYLEHILRTNTNGSKIFTKSPVKNLYLNWPQLVLDYGSLLCNFTSFPKAGDQNMFAVEFIELATSIWINTEKSYDITVSLIRMLYQLTGKCFQAQQIFRSLVFFLRHIEEFEEASEAFEIYKFLCVKSHERLARKNSDVAGSFSDIKPVFVDEPKSIIEVCSVMMTVYAQYLRNLKKVSEILDYITKIASDYDLLKRDDIAPLIYHTEGVAYSFMYYQANNPSLRERYHQKSVQSYQKCLEKQPTNTNALFHLAMQYSERRAITDAMQIVRRLLEVNPKYSIVSWHLLVLCVSCSEQYAAGIKLIDSVFETWGINHVNEDGTIEISLTNLTFNDRCALVDLLITKLALFEAEKGVEATLDIQDEIFTLFASIFDLNEYRISKEGSSDELSTLLERSTIQSIKSSKKISKDVENEKGSILGFSRKSSLKRSTVLSKKSHSSYKENFQLRRGKTVSYLNQKLWLTAASLFLKSGNDDQARSALLEAKKIDHECAWVYYLNGLSLLQQGKEVEGYEQLDVAHYLDPEDPLISTALAKCLLQGGYGPMHSRRNRADAILSSCTLQYGWDLPEAWYYTAEIFRQLGDLKQAAFSYDYCIQLADTNPVRRWSNLQPRFMNV.

3 TPR repeats span residues 342–377 (QQIF…KSHE), 460–493 (SFMY…QPTN), and 494–527 (TNAL…NPKY). Residues serine 632, serine 633, and serine 637 each carry the phosphoserine modification. TPR repeat units lie at residues 665–698 (ILGF…RRGK), 705–738 (QKLW…DHEC), 740–772 (WVYY…DPED), and 814–847 (PEAW…ADTN).

Belongs to the YPP1 family.

Its subcellular location is the cytoplasm. Functionally, involved in endocytosis. The protein is Putative cargo-transport protein ypp1 (ypp1) of Schizosaccharomyces pombe (strain 972 / ATCC 24843) (Fission yeast).